The following is an 87-amino-acid chain: Small ribosomal subunit protein bS18 (87 aa).

It belongs to the bacterial ribosomal protein bS18 family. In terms of assembly, part of the 30S ribosomal subunit. Forms a tight heterodimer with protein bS6.

In terms of biological role, binds as a heterodimer with protein bS6 to the central domain of the 16S rRNA, where it helps stabilize the platform of the 30S subunit. The polypeptide is Small ribosomal subunit protein bS18 (Campylobacter hominis (strain ATCC BAA-381 / DSM 21671 / CCUG 45161 / LMG 19568 / NCTC 13146 / CH001A)).